The primary structure comprises 88 residues: UPF0297 protein EAT1b_2723 (88 aa).

Belongs to the UPF0297 family.

The sequence is that of UPF0297 protein EAT1b_2723 from Exiguobacterium sp. (strain ATCC BAA-1283 / AT1b).